A 1026-amino-acid polypeptide reads, in one-letter code: MTRTQKGKTFLPHCFYQSLPPRLGWGMILNYSKLKGKEECASVSSVPMVFFSSQYRLHRKSQYLKMAAANLTFSQEVVWQRGLPSIPYSQYSFDHLYNTNDIIHTPQIRKARPQKPVSFKFLGSSSPLTGDTSLAVKTESSANPEKKLKKSKPASTVREAPRPLIHHPCMHPDMLGRPPSLDVNLEEREAWLLPPEKEARAWEATVLEKLNERTARWIQSKRPRRPGASPNKWQSFLRQQYDWSHIRDELTSASDLELLKQLEAEETAEFEDQSVILPPQEKKKPELLLPVYYRLPSYFQQAETVEIMPGNKSTEDIHEKTSLSQPQTQSYFRQVTPRAGKFAYSTDNTFEQEIYFDEVQIIHQIGAKRDQIVLENLNRYNKQLSKVFPETPEKWSAQAIPEASYRPVQGALRWTALPTPAKDMLLQVGEKDVPIKTRRLKKQAKSLQEDVTWELVVLRRMLKEWKTAWALIIEWHHETVENLLQSLGDLHDDVRIKAITTCATAALERPRIATSQRDSDKTIQDLPEVLLPALEAALCDKNAHVRMAAAICQYAIQSHNPLARNIMQTALLKGNSVDSWAAAQCLALEGTATYPVIKRILHQLFTKKNEDTEEQSYILLSYLSEKTTLIHTMLAVELNSCQWKNRIVACQAFSRISGNVCLDMKHKLIQLMWNDWNKEVRRAAAQALGQMSLGKEVHDIIRVKLGQGNSQERVEALYLIGELKLMTAKLLPSFLHCFSDDFTAVRRAACLAAGALQIRDKMVLECLLNLMQRDPYWKIKAFAIRALGQIGQVSPELTDLLLWAIHYEESPGVRLEACRSILALKLQGDRVRDTFLDVLLLENHDAVLKEMYQTMKILNLGNEGNQEMLQEIKNRIKTLSQKDLLTHKILKLEMVMGKVREEAKRVYLKPKGEQGPLTLQTLLQETFQDEMVLPRRPSEVCDTEAVIKPVKPRAPNPWLQSSVPGLTTRSKVRSSLVKDLRTSPEKRIAVGPFRSDYPALYLGKFSERTFFSPIMSSPSGKKGAHL.

The interval 135–175 (AVKTESSANPEKKLKKSKPASTVREAPRPLIHHPCMHPDML) is disordered. HEAT repeat units follow at residues 530–568 (LLPALEAALCDKNAHVRMAAAICQYAIQSHNPLARNIMQ), 724–760 (KLMTAKLLPSFLHCFSDDFTAVRRAACLAAGALQIRD), and 761–794 (KMVLECLLNLMQRDPYWKIKAFAIRALGQIGQVS).

The chain is HEAT repeat-containing protein 4 (HEATR4) from Homo sapiens (Human).